A 194-amino-acid polypeptide reads, in one-letter code: Lytic chitin monooxygenase (194 aa).

The first 28 residues, 1–28, serve as a signal peptide directing secretion; that stretch reads MKKSLLTIVLAFSFVLGGAALAPTVSEA. Positions 29 and 114 each coordinate Cu cation. The 163-residue stretch at 29-191 folds into the Chitin-binding type-4 domain; the sequence is HGYVASPGSR…VNAFYQAIDV (163 aa).

Cu(2+) is required as a cofactor.

It is found in the secreted. The catalysed reaction is [(1-&gt;4)-N-acetyl-beta-D-glucosaminyl]n+m + reduced acceptor + O2 = [(1-&gt;4)-N-acetyl-beta-D-glucosaminyl]m-1-(1-&gt;4)-2-(acetylamino)-2-deoxy-D-glucono-1,5-lactone + [(1-&gt;4)-N-acetyl-beta-D-glucosaminyl]n + acceptor + H2O.. It participates in glycan degradation; chitin degradation. Its function is as follows. Involved in chitin degradation. Catalyzes the oxidative cleavage of glycosidic bonds in both alpha- and beta-chitin via a copper-dependent mechanism, leading to oxidized chitooligosaccharides with a dominance of even-numbered products. Acts synergistically with the chitinase EfChi18A, and combining the two enzymes leads to rapid and complete depolymerization of crystalline chitin, especially with beta-chitin as a substrate. Is likely involved in a chitin degradation pathway that allows E.faecalis V583 to grow on chitin as a carbon source. The sequence is that of Lytic chitin monooxygenase from Enterococcus faecalis (strain ATCC 700802 / V583).